The sequence spans 208 residues: MAEAEGSSLLLLPPPPPPPRMAEVEAPTAAETDMKQYQGSGGVAMDVERSRFPYCVVWTPIPVLTWFFPIIGHMGICTSTGVIRDFAGPYFVSEDNMAFGKPAKYWKLDPAQVYASGPNAWDTAVHDASEEYKHRMHNLCCDNCHSHVALALNLMRYNNSTNWNMVTLCFFCLLYGKYVSVGAFVKTWLPFILLLGIILTVSLVFNLR.

The disordered stretch occupies residues 1–26 (MAEAEGSSLLLLPPPPPPPRMAEVEA). Topologically, residues 1–55 (MAEAEGSSLLLLPPPPPPPRMAEVEAPTAAETDMKQYQGSGGVAMDVERSRFPYC) are extracellular. The chain crosses the membrane as a helical span at residues 56-76 (VVWTPIPVLTWFFPIIGHMGI). Topologically, residues 77-164 (CTSTGVIRDF…MRYNNSTNWN (88 aa)) are cytoplasmic. Residues 165–185 (MVTLCFFCLLYGKYVSVGAFV) form a helical membrane-spanning segment. Position 186 (K186) is a topological domain, extracellular. A helical transmembrane segment spans residues 187 to 207 (TWLPFILLLGIILTVSLVFNL). Residue R208 is a topological domain, cytoplasmic.

In terms of tissue distribution, widely expressed. The highest expression is observed in the brain.

The protein resides in the membrane. Its subcellular location is the cell projection. The protein localises to the dendrite. This is Transmembrane protein 222 (TMEM222) from Homo sapiens (Human).